Reading from the N-terminus, the 127-residue chain is Riboflavin kinase (127 aa).

10 to 15 (GLGEGR) contributes to the CDP binding site. Threonine 39 and asparagine 41 together coordinate Mg(2+). FMN is bound by residues threonine 96 and glutamate 104. 109 to 112 (VHLR) provides a ligand contact to CDP.

Belongs to the archaeal riboflavin kinase family. Mg(2+) serves as cofactor.

The catalysed reaction is riboflavin + CTP = CDP + FMN + H(+). It participates in cofactor biosynthesis; FMN biosynthesis; FMN from riboflavin (CTP route): step 1/1. Functionally, catalyzes the CTP-dependent phosphorylation of riboflavin (vitamin B2) to form flavin mononucleotide (FMN). This is Riboflavin kinase from Methanococcus maripaludis (strain C7 / ATCC BAA-1331).